The sequence spans 256 residues: Triosephosphate isomerase (256 aa).

Residue 9–11 (NWK) coordinates substrate. Catalysis depends on histidine 97, which acts as the Electrophile. Glutamate 169 acts as the Proton acceptor in catalysis. Residues glycine 175, serine 214, and 235–236 (GG) contribute to the substrate site.

This sequence belongs to the triosephosphate isomerase family. In terms of assembly, homodimer.

The protein resides in the cytoplasm. The catalysed reaction is D-glyceraldehyde 3-phosphate = dihydroxyacetone phosphate. The protein operates within carbohydrate biosynthesis; gluconeogenesis. It participates in carbohydrate degradation; glycolysis; D-glyceraldehyde 3-phosphate from glycerone phosphate: step 1/1. Involved in the gluconeogenesis. Catalyzes stereospecifically the conversion of dihydroxyacetone phosphate (DHAP) to D-glyceraldehyde-3-phosphate (G3P). The protein is Triosephosphate isomerase of Moritella marina (Vibrio marinus).